Consider the following 601-residue polypeptide: DNA topoisomerase I, mitochondrial (601 aa).

Residues 1 to 50 constitute a mitochondrion transit peptide; sequence MRVVRLLRLRAALTLLGEVPRRPASRGVPGSRRTQKGSGARWEKEKHEDG. Residues 22–48 form a disordered region; it reads RPASRGVPGSRRTQKGSGARWEKEKHE. Interaction with DNA regions lie at residues 261–262, 324–329, and 421–423; these read KY, RAGNEK, and TAK. One can recognise a Topo IB-type catalytic domain in the interval 268 to 601; that stretch reads CSKLKGETAW…LAMAGEDFEF (334 aa). The O-(3'-phospho-DNA)-tyrosine intermediate role is filled by Tyr559.

This sequence belongs to the type IB topoisomerase family. It depends on Ca(2+) as a cofactor. Mg(2+) serves as cofactor.

It localises to the mitochondrion. It catalyses the reaction ATP-independent breakage of single-stranded DNA, followed by passage and rejoining.. Its function is as follows. Releases the supercoiling and torsional tension of DNA introduced during duplication of mitochondrial DNA by transiently cleaving and rejoining one strand of the DNA duplex. Introduces a single-strand break via transesterification at a target site in duplex DNA. The scissile phosphodiester is attacked by the catalytic tyrosine of the enzyme, resulting in the formation of a DNA-(3'-phosphotyrosyl)-enzyme intermediate and the expulsion of a 5'-OH DNA strand. The free DNA strand then rotates around the intact phosphodiester bond on the opposing strand, thus removing DNA supercoils. Finally, in the religation step, the DNA 5'-OH attacks the covalent intermediate to expel the active-site tyrosine and restore the DNA phosphodiester backbone. The chain is DNA topoisomerase I, mitochondrial (TOP1MT) from Pan troglodytes (Chimpanzee).